Here is an 84-residue protein sequence, read N- to C-terminus: uncharacterized protein (84 aa).

A helical transmembrane segment spans residues A10–H32.

The protein resides in the membrane. This is an uncharacterized protein from Saccharomyces cerevisiae (strain ATCC 204508 / S288c) (Baker's yeast).